The sequence spans 524 residues: 5'-AMP-activated protein kinase subunit gamma-2 (524 aa).

Residues 1–178 (MPLLDGDLEG…TRPPLASPTH (178 aa)) form a disordered region. S21, S27, S29, S46, S94, S99, S117, and S118 each carry phosphoserine. The segment covering 112-123 (TSGLSSSPSTPT) has biased composition (low complexity). T121 is modified (phosphothreonine). A compositionally biased stretch (basic and acidic residues) spans 135 to 145 (SYKHEPERLEN). Polar residues predominate over residues 148-168 (YASSSPPDTGQRFCPSSFQSP). S152 is subject to Phosphoserine. 3 consecutive CBS domains span residues 230–290 (PTSS…KSPM), 312–370 (TFKP…MSDM), and 385–447 (IGTY…NLDI). ADP is bound by residues R257, 272–277 (MLTITD), V317, 338–339 (HR), and K357. AMP contacts are provided by residues R257, 272–277 (MLTITD), V317, H338, 338–339 (HR), K357, T387, A392, 413–414 (SA), 429–432 (SKFD), R456, H485, 485–486 (HR), and 501–504 (SLSD). ATP-binding positions include R257, 272-277 (MLTITD), V317, 338-339 (HR), R339, and K357. An AMPK pseudosubstrate motif is present at residues 325 to 346 (LLDAVYSLIKNKIHRLPVIDPI). ADP-binding positions include 429–432 (SKFD), R456, and 485–486 (HR). Residues 429 to 432 (SKFD), R456, and 485 to 486 (HR) contribute to the ATP site. The CBS 4 domain maps to 459–517 (YFEGVVKCNKLEILETIVDRIVRAEVHRLVVANEADSIVGIISLSDILQALILTPAGAK).

Belongs to the 5'-AMP-activated protein kinase gamma subunit family. As to quaternary structure, AMPK is a heterotrimer of an alpha catalytic subunit (PRKAA1 or PRKAA2), a beta (PRKAB1 or PRKAB2) and a gamma non-catalytic subunits (PRKAG1, PRKAG2 or PRKAG3). Interacts with FNIP1 and FNIP2. Phosphorylated by ULK1; leading to negatively regulate AMPK activity and suggesting the existence of a regulatory feedback loop between ULK1 and AMPK. Post-translationally, glycosylated; O-GlcNAcylated by OGT, promoting the AMP-activated protein kinase (AMPK) activity.

Functionally, AMP/ATP-binding subunit of AMP-activated protein kinase (AMPK), an energy sensor protein kinase that plays a key role in regulating cellular energy metabolism. In response to reduction of intracellular ATP levels, AMPK activates energy-producing pathways and inhibits energy-consuming processes: inhibits protein, carbohydrate and lipid biosynthesis, as well as cell growth and proliferation. AMPK acts via direct phosphorylation of metabolic enzymes, and by longer-term effects via phosphorylation of transcription regulators. Also acts as a regulator of cellular polarity by remodeling the actin cytoskeleton; probably by indirectly activating myosin. Gamma non-catalytic subunit mediates binding to AMP, ADP and ATP, leading to activate or inhibit AMPK: AMP-binding results in allosteric activation of alpha catalytic subunit (PRKAA1 or PRKAA2) both by inducing phosphorylation and preventing dephosphorylation of catalytic subunits. ADP also stimulates phosphorylation, without stimulating already phosphorylated catalytic subunit. ATP promotes dephosphorylation of catalytic subunit, rendering the AMPK enzyme inactive. The sequence is that of 5'-AMP-activated protein kinase subunit gamma-2 (PRKAG2) from Pongo abelii (Sumatran orangutan).